Reading from the N-terminus, the 89-residue chain is Small ribosomal subunit protein uS15 (89 aa).

It belongs to the universal ribosomal protein uS15 family. Part of the 30S ribosomal subunit. Forms a bridge to the 50S subunit in the 70S ribosome, contacting the 23S rRNA.

In terms of biological role, one of the primary rRNA binding proteins, it binds directly to 16S rRNA where it helps nucleate assembly of the platform of the 30S subunit by binding and bridging several RNA helices of the 16S rRNA. Forms an intersubunit bridge (bridge B4) with the 23S rRNA of the 50S subunit in the ribosome. The protein is Small ribosomal subunit protein uS15 of Chlorobium phaeobacteroides (strain BS1).